The chain runs to 191 residues: ATP synthase subunit b 1 (191 aa).

The helical transmembrane segment at 7-25 (RMRILCLCATTLLMAGSAL) threads the bilayer.

This sequence belongs to the ATPase B chain family. As to quaternary structure, F-type ATPases have 2 components, F(1) - the catalytic core - and F(0) - the membrane proton channel. F(1) has five subunits: alpha(3), beta(3), gamma(1), delta(1), epsilon(1). F(0) has three main subunits: a(1), b(2) and c(10-14). The alpha and beta chains form an alternating ring which encloses part of the gamma chain. F(1) is attached to F(0) by a central stalk formed by the gamma and epsilon chains, while a peripheral stalk is formed by the delta and b chains.

The protein resides in the cell inner membrane. F(1)F(0) ATP synthase produces ATP from ADP in the presence of a proton or sodium gradient. F-type ATPases consist of two structural domains, F(1) containing the extramembraneous catalytic core and F(0) containing the membrane proton channel, linked together by a central stalk and a peripheral stalk. During catalysis, ATP synthesis in the catalytic domain of F(1) is coupled via a rotary mechanism of the central stalk subunits to proton translocation. In terms of biological role, component of the F(0) channel, it forms part of the peripheral stalk, linking F(1) to F(0). The sequence is that of ATP synthase subunit b 1 from Syntrophotalea carbinolica (strain DSM 2380 / NBRC 103641 / GraBd1) (Pelobacter carbinolicus).